The chain runs to 86 residues: MSDDITSEAQTIAVGQLRAFIERIERLEEEKKTIGDDIKEVYAELKSSGFDSKVVRTIIRLRKKEDHERQEEEAMLQLYMDALGMS.

This sequence belongs to the UPF0335 family.

The polypeptide is UPF0335 protein BR1752/BS1330_I1746 (Brucella suis biovar 1 (strain 1330)).